The chain runs to 129 residues: Follitropin subunit beta (129 aa).

The first 20 residues, 1–20 (MKTAQFYVLFFCWKAIWCNG), serve as a signal peptide directing secretion. Disulfide bonds link Cys-21–Cys-69, Cys-35–Cys-84, Cys-38–Cys-122, Cys-46–Cys-100, Cys-50–Cys-102, and Cys-105–Cys-112. Residues Asn-25 and Asn-42 are each glycosylated (N-linked (GlcNAc...) asparagine).

It belongs to the glycoprotein hormones subunit beta family. As to quaternary structure, heterodimer. The active follitropin is a heterodimer composed of an alpha chain/CGA shared with other hormones and a unique beta chain/FSHB shown here.

The protein localises to the secreted. Together with the alpha chain CGA constitutes follitropin, the follicle-stimulating hormone, and provides its biological specificity to the hormone heterodimer. Binds FSHR, a G protein-coupled receptor, on target cells to activate downstream signaling pathways. Follitropin is involved in follicle development and spermatogenesis in reproductive organs. This Trichosurus vulpecula (Brush-tailed possum) protein is Follitropin subunit beta (FSHB).